The chain runs to 353 residues: Peptide chain release factor 1 (353 aa).

At Gln230 the chain carries N5-methylglutamine.

Belongs to the prokaryotic/mitochondrial release factor family. Methylated by PrmC. Methylation increases the termination efficiency of RF1.

It localises to the cytoplasm. Functionally, peptide chain release factor 1 directs the termination of translation in response to the peptide chain termination codons UAG and UAA. The sequence is that of Peptide chain release factor 1 from Gluconobacter oxydans (strain 621H) (Gluconobacter suboxydans).